Consider the following 285-residue polypeptide: Nucleotide-binding protein in ptsN-ptsO intergenic region (285 aa).

Residue 8–15 (GRSGSGKS) participates in ATP binding. 60–63 (DARN) contributes to the GTP binding site.

This sequence belongs to the RapZ-like family.

Functionally, displays ATPase and GTPase activities. This Stutzerimonas stutzeri (Pseudomonas stutzeri) protein is Nucleotide-binding protein in ptsN-ptsO intergenic region.